Consider the following 330-residue polypeptide: ADP-L-glycero-D-manno-heptose-6-epimerase (330 aa).

Residues 11–12 (FI), 32–33 (DN), lysine 39, lysine 54, 75–79 (EGACS), and asparagine 92 each bind NADP(+). Tyrosine 139 acts as the Proton acceptor in catalysis. Lysine 143 serves as a coordination point for NADP(+). Residue asparagine 168 participates in substrate binding. NADP(+) contacts are provided by valine 169 and lysine 177. Catalysis depends on lysine 177, which acts as the Proton acceptor. Substrate is bound by residues arginine 179, histidine 186, 200-203 (FGEY), arginine 213, and tyrosine 292.

This sequence belongs to the NAD(P)-dependent epimerase/dehydratase family. HldD subfamily. As to quaternary structure, homopentamer. NADP(+) is required as a cofactor.

It catalyses the reaction ADP-D-glycero-beta-D-manno-heptose = ADP-L-glycero-beta-D-manno-heptose. The protein operates within nucleotide-sugar biosynthesis; ADP-L-glycero-beta-D-manno-heptose biosynthesis; ADP-L-glycero-beta-D-manno-heptose from D-glycero-beta-D-manno-heptose 7-phosphate: step 4/4. In terms of biological role, catalyzes the interconversion between ADP-D-glycero-beta-D-manno-heptose and ADP-L-glycero-beta-D-manno-heptose via an epimerization at carbon 6 of the heptose. The sequence is that of ADP-L-glycero-D-manno-heptose-6-epimerase from Burkholderia cenocepacia (strain ATCC BAA-245 / DSM 16553 / LMG 16656 / NCTC 13227 / J2315 / CF5610) (Burkholderia cepacia (strain J2315)).